We begin with the raw amino-acid sequence, 167 residues long: Small ribosomal subunit protein uS5 (167 aa).

Positions 12-75 (LQEKLIAVNR…EKARRSMVTI (64 aa)) constitute an S5 DRBM domain.

This sequence belongs to the universal ribosomal protein uS5 family. As to quaternary structure, part of the 30S ribosomal subunit. Contacts proteins S4 and S8.

In terms of biological role, with S4 and S12 plays an important role in translational accuracy. Its function is as follows. Located at the back of the 30S subunit body where it stabilizes the conformation of the head with respect to the body. The protein is Small ribosomal subunit protein uS5 of Vibrio cholerae serotype O1 (strain ATCC 39541 / Classical Ogawa 395 / O395).